Reading from the N-terminus, the 115-residue chain is U3-lycotoxin-Ls1a (115 aa).

Positions 1–20 (MKFVLLFGVLLVTLFSYSSA) are cleaved as a signal peptide. A propeptide spanning residues 21-44 (EMLDDFDQADEDELLSSIEKEEAR) is cleaved from the precursor. 4 disulfide bridges follow: Cys-48–Cys-63, Cys-55–Cys-72, Cys-62–Cys-87, and Cys-74–Cys-85.

Belongs to the neurotoxin 19 (CSTX) family. 01 subfamily. As to expression, expressed by the venom gland.

It localises to the secreted. The sequence is that of U3-lycotoxin-Ls1a from Lycosa singoriensis (Wolf spider).